Reading from the N-terminus, the 203-residue chain is Serine hydrolase-like protein (203 aa).

The region spanning 33–145 (PPVLCLHGWL…FLLESDEMEN (113 aa)) is the AB hydrolase-1 domain. Residue serine 108 is part of the active site.

It belongs to the AB hydrolase superfamily.

Its function is as follows. Putative serine hydrolase. This chain is Serine hydrolase-like protein (SERHL), found in Homo sapiens (Human).